We begin with the raw amino-acid sequence, 1667 residues long: Myomesin-1 (1667 aa).

Phosphoserine is present on residues serine 124 and serine 142. The span at 192–210 shows a compositional bias: low complexity; the sequence is SKQSTASKQSATSKRTTST. The interval 192-217 is disordered; it reads SKQSTASKQSATSKRTTSTLQREETF. Ig-like C2-type domains follow at residues 258–349 and 376–478; these read PEFI…ASVV and PYGY…AYVF. Fibronectin type-III domains are found at residues 492–587, 620–714, and 721–814; these read APLD…ALDP, PPTD…VVGD, and APGK…VKAA. Residues 818–915 form a disordered region; that stretch reads GVSPDVWPQL…PKKKKDPVAV (98 aa). Phosphoserine is present on residues serine 863 and serine 867. Low complexity predominate over residues 885–894; that stretch reads EPLSSPPQEA. 2 Fibronectin type-III domains span residues 918–1016 and 1023–1122; these read APYD…CEEW and PPHS…TRPG. Phosphoserine is present on serine 1036. Ig-like C2-type domains are found at residues 1114–1212, 1340–1426, and 1555–1644; these read PVVA…EEMK, PHFA…LKLV, and RVLG…FTVS.

In terms of assembly, homodimer. Interacts with TTN/titin and PNKD. In terms of tissue distribution, ubiquitously expressed in all striated muscles. Expressed in all fiber types.

The protein resides in the cytoplasm. It localises to the myofibril. The protein localises to the sarcomere. It is found in the m line. In terms of biological role, may link the intermediate filament cytoskeleton to the M-disk of the myofibrils in striated muscle. May also contact myosin filaments. Also binds beta-integrins. The protein is Myomesin-1 (Myom1) of Mus musculus (Mouse).